We begin with the raw amino-acid sequence, 227 residues long: MEGQSGRCKIVVVGDAECGKTALLQVFAKDAYPGSYVPTVFENYTASFEIDKRRIELNMWDTSGSSYYDNVRPLAYPDSDAVLICFDISRPETLDSVLKKWQGETQEFCPNAKVVLVGCKLDMRTDLATLRELSKQRLIPVTHEQGTVLAKQVGAVSYVECSSRSSERSVRDVFHVATVASLGRGHRQLRRTDSRRGLQRSTQLSGRPDRGNEGEMHKDRAKSCNLM.

14-21 (GDAECGKT) is a GTP binding site. An Effector region motif is present at residues 36–44 (YVPTVFENY). GTP-binding positions include 61-65 (DTSGS) and 119-122 (CKLD). The disordered stretch occupies residues 186–227 (HRQLRRTDSRRGLQRSTQLSGRPDRGNEGEMHKDRAKSCNLM). Residues 207–227 (RPDRGNEGEMHKDRAKSCNLM) show a composition bias toward basic and acidic residues. Cysteine 224 carries the post-translational modification Cysteine methyl ester. The S-geranylgeranyl cysteine moiety is linked to residue cysteine 224. Positions 225–227 (NLM) are cleaved as a propeptide — removed in mature form.

It belongs to the small GTPase superfamily. Rho family. In terms of assembly, interacts with the Rho-GAP domain of RACGAP1. Interacts with UBXD5. Interacts with PRAG1. In terms of tissue distribution, expressed specifically in neurons in the brain and spinal cord and also in hepatic stellate cells.

Its subcellular location is the cytoplasmic vesicle. It is found in the secretory vesicle. The protein localises to the acrosome membrane. In terms of biological role, may be specifically involved in neuronal and hepatic functions. Is a C3 toxin-insensitive member of the Rho subfamily. The chain is Rho-related GTP-binding protein RhoN (Rnd2) from Mus musculus (Mouse).